The chain runs to 135 residues: UPF0299 membrane protein Spro_1570 (135 aa).

4 consecutive transmembrane segments (helical) span residues 4–24, 30–50, 63–83, and 93–113; these read LFTLCWKYLRAIVLIYLCLFA, ALLPIAIPGSIIGMLLLFALL, GCHLLIRYMVLLFVPIGVGVM, and LGPLVVSCIISTLMVLVVVGY.

It belongs to the UPF0299 family.

It localises to the cell inner membrane. In Serratia proteamaculans (strain 568), this protein is UPF0299 membrane protein Spro_1570.